Reading from the N-terminus, the 150-residue chain is Cytochrome c oxidase subunit 5A, mitochondrial (150 aa).

The N-terminal 41 residues, 1-41, are a transit peptide targeting the mitochondrion; sequence MLGAALRRCAVAATSRAGPRGLLHSAPNPGPAAAIQSVRCY. Positions 2–17 match the SIFI-degron motif; the sequence is LGAALRRCAVAATSRA. 2 positions are modified to N6-acetyllysine: Lys-87 and Lys-113. Thr-141 is modified (phosphothreonine).

It belongs to the cytochrome c oxidase subunit 5A family. As to quaternary structure, component of the cytochrome c oxidase (complex IV, CIV), a multisubunit enzyme composed of 14 subunits. The complex is composed of a catalytic core of 3 subunits MT-CO1, MT-CO2 and MT-CO3, encoded in the mitochondrial DNA, and 11 supernumerary subunits COX4I, COX5A, COX5B, COX6A, COX6B, COX6C, COX7A, COX7B, COX7C, COX8 and NDUFA4, which are encoded in the nuclear genome. The complex exists as a monomer or a dimer and forms supercomplexes (SCs) in the inner mitochondrial membrane with NADH-ubiquinone oxidoreductase (complex I, CI) and ubiquinol-cytochrome c oxidoreductase (cytochrome b-c1 complex, complex III, CIII), resulting in different assemblies (supercomplex SCI(1)III(2)IV(1) and megacomplex MCI(2)III(2)IV(2)). Interacts with AFG1L. Interacts with RAB5IF. In response to mitochondrial stress, the precursor protein is ubiquitinated by the SIFI complex in the cytoplasm before mitochondrial import, leading to its degradation. Within the SIFI complex, UBR4 initiates ubiquitin chain that are further elongated or branched by KCMF1.

The protein localises to the mitochondrion inner membrane. Its pathway is energy metabolism; oxidative phosphorylation. In terms of biological role, component of the cytochrome c oxidase, the last enzyme in the mitochondrial electron transport chain which drives oxidative phosphorylation. The respiratory chain contains 3 multisubunit complexes succinate dehydrogenase (complex II, CII), ubiquinol-cytochrome c oxidoreductase (cytochrome b-c1 complex, complex III, CIII) and cytochrome c oxidase (complex IV, CIV), that cooperate to transfer electrons derived from NADH and succinate to molecular oxygen, creating an electrochemical gradient over the inner membrane that drives transmembrane transport and the ATP synthase. Cytochrome c oxidase is the component of the respiratory chain that catalyzes the reduction of oxygen to water. Electrons originating from reduced cytochrome c in the intermembrane space (IMS) are transferred via the dinuclear copper A center (CU(A)) of subunit 2 and heme A of subunit 1 to the active site in subunit 1, a binuclear center (BNC) formed by heme A3 and copper B (CU(B)). The BNC reduces molecular oxygen to 2 water molecules using 4 electrons from cytochrome c in the IMS and 4 protons from the mitochondrial matrix. The protein is Cytochrome c oxidase subunit 5A, mitochondrial (COX5A) of Saguinus labiatus (Red-chested mustached tamarin).